The sequence spans 163 residues: NADH-quinone oxidoreductase subunit I (163 aa).

4Fe-4S ferredoxin-type domains are found at residues 54–84 and 94–123; these read LRRY…IESD and TRYD…ETPI. [4Fe-4S] cluster is bound by residues C64, C67, C70, C74, C103, C106, C109, and C113.

It belongs to the complex I 23 kDa subunit family. In terms of assembly, NDH-1 is composed of 14 different subunits. Subunits NuoA, H, J, K, L, M, N constitute the membrane sector of the complex. The cofactor is [4Fe-4S] cluster.

It is found in the cell inner membrane. The enzyme catalyses a quinone + NADH + 5 H(+)(in) = a quinol + NAD(+) + 4 H(+)(out). NDH-1 shuttles electrons from NADH, via FMN and iron-sulfur (Fe-S) centers, to quinones in the respiratory chain. The immediate electron acceptor for the enzyme in this species is believed to be ubiquinone. Couples the redox reaction to proton translocation (for every two electrons transferred, four hydrogen ions are translocated across the cytoplasmic membrane), and thus conserves the redox energy in a proton gradient. The polypeptide is NADH-quinone oxidoreductase subunit I (Cupriavidus pinatubonensis (strain JMP 134 / LMG 1197) (Cupriavidus necator (strain JMP 134))).